A 136-amino-acid chain; its full sequence is Congerin-2 (136 aa).

N-acetylserine is present on Ser2. The 133-residue stretch at 4–136 (RAEVRNIPFK…DARLTFVRLE (133 aa)) folds into the Galectin domain. 70 to 76 (WQQEERS) is a binding site for a beta-D-galactoside.

As to quaternary structure, homodimer.

This protein binds beta-galactoside. Its physiological function is not yet known. This Conger myriaster (Conger eel) protein is Congerin-2.